The following is a 391-amino-acid chain: 4-hydroxy-3-methylbut-2-en-1-yl diphosphate synthase (flavodoxin) (391 aa).

Residues C282, C285, C317, and E324 each contribute to the [4Fe-4S] cluster site.

It belongs to the IspG family. Requires [4Fe-4S] cluster as cofactor.

It carries out the reaction (2E)-4-hydroxy-3-methylbut-2-enyl diphosphate + oxidized [flavodoxin] + H2O + 2 H(+) = 2-C-methyl-D-erythritol 2,4-cyclic diphosphate + reduced [flavodoxin]. It functions in the pathway isoprenoid biosynthesis; isopentenyl diphosphate biosynthesis via DXP pathway; isopentenyl diphosphate from 1-deoxy-D-xylulose 5-phosphate: step 5/6. Its function is as follows. Converts 2C-methyl-D-erythritol 2,4-cyclodiphosphate (ME-2,4cPP) into 1-hydroxy-2-methyl-2-(E)-butenyl 4-diphosphate. The protein is 4-hydroxy-3-methylbut-2-en-1-yl diphosphate synthase (flavodoxin) of Acidothermus cellulolyticus (strain ATCC 43068 / DSM 8971 / 11B).